Consider the following 299-residue polypeptide: Oxygen-dependent coproporphyrinogen-III oxidase (299 aa).

Position 92 (Ser92) interacts with substrate. Mn(2+) contacts are provided by His96 and His106. The Proton donor role is filled by His106. 108–110 (NVR) provides a ligand contact to substrate. Residues His145 and His175 each coordinate Mn(2+). The interval 240–275 (YVEFNLVWDRGTLFGLQTGGRTESILMSMPPLVRWE) is important for dimerization. 258-260 (GGR) contacts substrate.

This sequence belongs to the aerobic coproporphyrinogen-III oxidase family. As to quaternary structure, homodimer. Requires Mn(2+) as cofactor.

It localises to the cytoplasm. The enzyme catalyses coproporphyrinogen III + O2 + 2 H(+) = protoporphyrinogen IX + 2 CO2 + 2 H2O. It functions in the pathway porphyrin-containing compound metabolism; protoporphyrin-IX biosynthesis; protoporphyrinogen-IX from coproporphyrinogen-III (O2 route): step 1/1. Functionally, involved in the heme biosynthesis. Catalyzes the aerobic oxidative decarboxylation of propionate groups of rings A and B of coproporphyrinogen-III to yield the vinyl groups in protoporphyrinogen-IX. The protein is Oxygen-dependent coproporphyrinogen-III oxidase of Escherichia fergusonii (strain ATCC 35469 / DSM 13698 / CCUG 18766 / IAM 14443 / JCM 21226 / LMG 7866 / NBRC 102419 / NCTC 12128 / CDC 0568-73).